The chain runs to 23 residues: Cytochrome c3-1 (23 aa).

Residues 1–23 are disordered; the sequence is AAPKAPADGLKMDKTKQXVVFNH. Residue His-23 coordinates heme.

Post-translationally, binds 4 heme groups per subunit.

Its subcellular location is the periplasm. In terms of biological role, participates in sulfate respiration coupled with phosphorylation by transferring electrons from the enzyme dehydrogenase to ferredoxin. The protein is Cytochrome c3-1 of Nitratidesulfovibrio vulgaris (Desulfovibrio vulgaris).